Consider the following 171-residue polypeptide: Adenine phosphoribosyltransferase (171 aa).

The protein belongs to the purine/pyrimidine phosphoribosyltransferase family. As to quaternary structure, homodimer.

Its subcellular location is the cytoplasm. The catalysed reaction is AMP + diphosphate = 5-phospho-alpha-D-ribose 1-diphosphate + adenine. Its pathway is purine metabolism; AMP biosynthesis via salvage pathway; AMP from adenine: step 1/1. Functionally, catalyzes a salvage reaction resulting in the formation of AMP, that is energically less costly than de novo synthesis. The sequence is that of Adenine phosphoribosyltransferase from Halalkalibacterium halodurans (strain ATCC BAA-125 / DSM 18197 / FERM 7344 / JCM 9153 / C-125) (Bacillus halodurans).